The chain runs to 137 residues: Small ribosomal subunit protein uS11 (137 aa).

Disordered regions lie at residues 1–32 and 118–137; these read MPPKSRASGPKKTQKSRRRDKKNVPHGNAHIK and ISDVTPQPHNGCRPPKRRRV. The span at 12–21 shows a compositional bias: basic residues; sequence KTQKSRRRDK.

The protein belongs to the universal ribosomal protein uS11 family. In terms of assembly, part of the 30S ribosomal subunit. Interacts with proteins S7 and S18. Binds to IF-3.

Located on the platform of the 30S subunit, it bridges several disparate RNA helices of the 16S rRNA. Forms part of the Shine-Dalgarno cleft in the 70S ribosome. The sequence is that of Small ribosomal subunit protein uS11 from Nocardia farcinica (strain IFM 10152).